Consider the following 277-residue polypeptide: Phosphonates import ATP-binding protein PhnC 2 (277 aa).

The ABC transporter domain maps to 3 to 251 (ISLNGISVQH…LLQALYAQHL (249 aa)). Residue 40–47 (GPSGAGKT) coordinates ATP.

Belongs to the ABC transporter superfamily. Phosphonates importer (TC 3.A.1.9.1) family. The complex is composed of two ATP-binding proteins (PhnC), two transmembrane proteins (PhnE) and a solute-binding protein (PhnD).

It is found in the cell inner membrane. The enzyme catalyses phosphonate(out) + ATP + H2O = phosphonate(in) + ADP + phosphate + H(+). Functionally, part of the ABC transporter complex PhnCDE involved in phosphonates import. Responsible for energy coupling to the transport system. The polypeptide is Phosphonates import ATP-binding protein PhnC 2 (Albidiferax ferrireducens (strain ATCC BAA-621 / DSM 15236 / T118) (Rhodoferax ferrireducens)).